The following is a 125-amino-acid chain: Large ribosomal subunit protein uL22 (125 aa).

Belongs to the universal ribosomal protein uL22 family. Part of the 50S ribosomal subunit.

Its function is as follows. This protein binds specifically to 23S rRNA; its binding is stimulated by other ribosomal proteins, e.g. L4, L17, and L20. It is important during the early stages of 50S assembly. It makes multiple contacts with different domains of the 23S rRNA in the assembled 50S subunit and ribosome. The globular domain of the protein is located near the polypeptide exit tunnel on the outside of the subunit, while an extended beta-hairpin is found that lines the wall of the exit tunnel in the center of the 70S ribosome. The protein is Large ribosomal subunit protein uL22 of Acetivibrio thermocellus (strain ATCC 27405 / DSM 1237 / JCM 9322 / NBRC 103400 / NCIMB 10682 / NRRL B-4536 / VPI 7372) (Clostridium thermocellum).